Here is a 230-residue protein sequence, read N- to C-terminus: Orotidine 5'-phosphate decarboxylase (230 aa).

Substrate is bound by residues Asp8, Lys32, 59 to 68 (DLKLYDIPNT), Thr118, Arg178, Gln187, Gly207, and Arg208. Catalysis depends on Lys61, which acts as the Proton donor.

It belongs to the OMP decarboxylase family. Type 1 subfamily. In terms of assembly, homodimer.

The enzyme catalyses orotidine 5'-phosphate + H(+) = UMP + CO2. Its pathway is pyrimidine metabolism; UMP biosynthesis via de novo pathway; UMP from orotate: step 2/2. Its function is as follows. Catalyzes the decarboxylation of orotidine 5'-monophosphate (OMP) to uridine 5'-monophosphate (UMP). The protein is Orotidine 5'-phosphate decarboxylase of Nautilia profundicola (strain ATCC BAA-1463 / DSM 18972 / AmH).